A 273-amino-acid polypeptide reads, in one-letter code: 4-hydroxy-tetrahydrodipicolinate reductase (273 aa).

Residues 12–17 (GAGGRM) and E38 contribute to the NAD(+) site. R39 provides a ligand contact to NADP(+). NAD(+) contacts are provided by residues 102–104 (GTT) and 126–129 (AANF). The Proton donor/acceptor role is filled by H159. H160 provides a ligand contact to (S)-2,3,4,5-tetrahydrodipicolinate. K163 (proton donor) is an active-site residue. 169–170 (GT) is a (S)-2,3,4,5-tetrahydrodipicolinate binding site.

The protein belongs to the DapB family. In terms of assembly, homotetramer.

The protein localises to the cytoplasm. The catalysed reaction is (S)-2,3,4,5-tetrahydrodipicolinate + NAD(+) + H2O = (2S,4S)-4-hydroxy-2,3,4,5-tetrahydrodipicolinate + NADH + H(+). It carries out the reaction (S)-2,3,4,5-tetrahydrodipicolinate + NADP(+) + H2O = (2S,4S)-4-hydroxy-2,3,4,5-tetrahydrodipicolinate + NADPH + H(+). Its pathway is amino-acid biosynthesis; L-lysine biosynthesis via DAP pathway; (S)-tetrahydrodipicolinate from L-aspartate: step 4/4. Functionally, catalyzes the conversion of 4-hydroxy-tetrahydrodipicolinate (HTPA) to tetrahydrodipicolinate. This chain is 4-hydroxy-tetrahydrodipicolinate reductase, found in Escherichia coli O139:H28 (strain E24377A / ETEC).